The chain runs to 210 residues: MADWKNLTQAVGDLEEDDVMEILNDFVATNPTEAEAEEAVAACQAGMAVVGDLFEEGEYFVGDLIFAGELLTEAINVLKPVLGSGDTAVAGTILIGTAHGDLHDIGKNIFRSMAEAAGFQVTDLGIDVAIDTFVEKAKEIKPDIIGISGVLTLAIDSMKETSDALKAAGVDSKLIIGGNPVTKEACEYVGADDFTTNAAEGVKICQAWVG.

Residues 1–90 form the B12-binding N-terminal domain; sequence MADWKNLTQA…VLGSGDTAVA (90 aa). Positions 90-210 constitute a B12-binding domain; the sequence is AGTILIGTAH…GVKICQAWVG (121 aa). Residue histidine 103 coordinates methylcob(III)alamin.

The protein belongs to the methylamine corrinoid protein family. In terms of assembly, the proline betaine:THF methyl transfer system is composed of two methyltransferases, MtpB and MtqA, and the corrinoid protein MtqC. The L-carnitine:THF methyl transfer system is composed of two methyltransferases, MtcB and MtqA, and the corrinoid protein MtqC.

Its function is as follows. Involved in the degradation of the quaternary amines L-proline betaine and L-carnitine. Component of a corrinoid-dependent methyltransferase system that transfers a methyl group from L-proline betaine or L-carnitine to tetrahydrofolate (THF), forming methyl-THF, a key intermediate in the Wood-Ljungdahl acetogenesis pathway. Acts as a methyl group carrier between MtpB or MtcB, and MtqA. A methyl group from L-proline betaine or L-carnitine is first transferred to the corrinoid prosthetic group of MtqC by MtpB or MtcB, respectively, and then transferred from MtqC to THF by MtqA. The protein is Quaternary-amine-specific corrinoid protein of Eubacterium limosum.